Reading from the N-terminus, the 156-residue chain is Cellulose synthase operon protein D (156 aa).

The protein operates within glycan metabolism; bacterial cellulose biosynthesis. Its function is as follows. May have a major role in the perfection of crystallization, involved either in the pore structure itself or in the organization of the pores within the linear array of terminal synthesizing complexes (TCs). The protein is Cellulose synthase operon protein D of Komagataeibacter sucrofermentans (strain ATCC 700178 / DSM 15973 / CECT 7291 / JCM 9730 / LMG 18788 / BPR 2001) (Acetobacter xylinus subsp. sucrofermentans).